A 512-amino-acid polypeptide reads, in one-letter code: Glucose-1-phosphate adenylyltransferase small subunit 2, chloroplastic (512 aa).

The disordered stretch occupies residues 1-21 (MAAIGVLKVPPSSSSSSSSSS). A chloroplast-targeting transit peptide spans 1–63 (MAAIGVLKVP…RNPFIVSPKA (63 aa)). Positions 12–21 (SSSSSSSSSS) are enriched in low complexity.

The protein belongs to the bacterial/plant glucose-1-phosphate adenylyltransferase family. In terms of assembly, heterotetramer. In terms of tissue distribution, leaves and seeds.

Its subcellular location is the plastid. The protein localises to the chloroplast. The enzyme catalyses alpha-D-glucose 1-phosphate + ATP + H(+) = ADP-alpha-D-glucose + diphosphate. It functions in the pathway glycan biosynthesis; starch biosynthesis. With respect to regulation, activated by 3'phosphoglycerate, inhibited by orthophosphate. Allosteric regulation. In terms of biological role, this protein plays a role in synthesis of starch. It catalyzes the synthesis of the activated glycosyl donor, ADP-glucose from Glc-1-P and ATP. This chain is Glucose-1-phosphate adenylyltransferase small subunit 2, chloroplastic (AGPP), found in Vicia faba (Broad bean).